Here is a 432-residue protein sequence, read N- to C-terminus: Vacuolar protein sorting-associated protein 38 (432 aa).

N-linked (GlcNAc...) asparagine glycosylation is present at N20. Residues 216–287 (LDTYQENIKM…KEAIEKLQKK (72 aa)) are a coiled coil. Residues 348 to 365 (IINAMLGFYSLFIVIYSY) form a helical membrane-spanning segment.

The protein belongs to the VPS38 family. As to quaternary structure, component of the VPS34 PI3-kinase complex II composed of VPS15, VPS30, VPS34 and VPS38.

It is found in the golgi apparatus. The protein localises to the trans-Golgi network membrane. Its subcellular location is the endosome membrane. Functionally, involved in endosome-to-Golgi retrograde transport as part of the VPS34 PI3-kinase complex II. This complex is required for the endosome-to-Golgi retrieval of PEP1 and KEX2, and the recruitment of VPS5 and VPS7, two components of the retromer complex, to endosomal membranes (probably through generating a specific pool of phosphatidylinositol 3-phosphate allowing the recruitment of the retromer complex proteins to the endosome). Mediates the interaction between VPS30 and the VPS34-VPS15 core complex, leading to the recruitment of VPS30 to the membrane. The protein is Vacuolar protein sorting-associated protein 38 of Candida glabrata (strain ATCC 2001 / BCRC 20586 / JCM 3761 / NBRC 0622 / NRRL Y-65 / CBS 138) (Yeast).